The primary structure comprises 221 residues: 7-cyano-7-deazaguanine synthase (221 aa).

Residue 12-22 (FSGGQDSTTCL) participates in ATP binding. Zn(2+) contacts are provided by cysteine 190, cysteine 199, cysteine 202, and cysteine 205.

Belongs to the QueC family. As to quaternary structure, homodimer. Zn(2+) is required as a cofactor.

The enzyme catalyses 7-carboxy-7-deazaguanine + NH4(+) + ATP = 7-cyano-7-deazaguanine + ADP + phosphate + H2O + H(+). The protein operates within purine metabolism; 7-cyano-7-deazaguanine biosynthesis. Functionally, catalyzes the ATP-dependent conversion of 7-carboxy-7-deazaguanine (CDG) to 7-cyano-7-deazaguanine (preQ(0)). The sequence is that of 7-cyano-7-deazaguanine synthase from Clostridium novyi (strain NT).